The chain runs to 595 residues: Aspartate--tRNA(Asp/Asn) ligase (595 aa).

L-aspartate is bound at residue Glu171. Residues 195–198 (QLFK) are aspartate. Arg217 lines the L-aspartate pocket. ATP contacts are provided by residues 217 to 219 (RDE) and Gln226. His454 is a binding site for L-aspartate. Glu488 provides a ligand contact to ATP. Arg495 contacts L-aspartate. An ATP-binding site is contributed by 540–543 (GLDR).

Belongs to the class-II aminoacyl-tRNA synthetase family. Type 1 subfamily. Homodimer.

It localises to the cytoplasm. The catalysed reaction is tRNA(Asx) + L-aspartate + ATP = L-aspartyl-tRNA(Asx) + AMP + diphosphate. Aspartyl-tRNA synthetase with relaxed tRNA specificity since it is able to aspartylate not only its cognate tRNA(Asp) but also tRNA(Asn). Reaction proceeds in two steps: L-aspartate is first activated by ATP to form Asp-AMP and then transferred to the acceptor end of tRNA(Asp/Asn). The chain is Aspartate--tRNA(Asp/Asn) ligase from Bordetella petrii (strain ATCC BAA-461 / DSM 12804 / CCUG 43448).